The chain runs to 240 residues: uncharacterized protein (240 aa).

This is an uncharacterized protein from Bacillus subtilis (strain 168).